The sequence spans 1163 residues: Pesticidal crystal protein Cry26Aa (1163 aa).

This sequence belongs to the delta endotoxin family.

In terms of biological role, promotes colloidosmotic lysis by binding to the midgut epithelial cells of insects. The sequence is that of Pesticidal crystal protein Cry26Aa (cry26Aa) from Bacillus thuringiensis subsp. finitimus.